Here is a 213-residue protein sequence, read N- to C-terminus: Ribonuclease HII (213 aa).

Residues 27-213 (HAVAGVDEAG…FRGVKEHVAP (187 aa)) enclose the RNase H type-2 domain. Residues Asp33, Glu34, and Asp125 each coordinate a divalent metal cation.

The protein belongs to the RNase HII family. Requires Mn(2+) as cofactor. The cofactor is Mg(2+).

It is found in the cytoplasm. It catalyses the reaction Endonucleolytic cleavage to 5'-phosphomonoester.. Its function is as follows. Endonuclease that specifically degrades the RNA of RNA-DNA hybrids. The sequence is that of Ribonuclease HII from Geobacter metallireducens (strain ATCC 53774 / DSM 7210 / GS-15).